An 86-amino-acid polypeptide reads, in one-letter code: Putative regulatory protein Desal_2819 (86 aa).

Belongs to the RemA family.

The polypeptide is Putative regulatory protein Desal_2819 (Maridesulfovibrio salexigens (strain ATCC 14822 / DSM 2638 / NCIMB 8403 / VKM B-1763) (Desulfovibrio salexigens)).